The primary structure comprises 157 residues: MGKKGKGIKPVVDNRRARYEYHIKENLEAGLVLVGTEVKSLRMGKANLRDAYAVVKDGEIWVNNFHISPYDKGNQFNHDPLRPKKLLLHRREINRLYALQREKGLTLIPLKIYFKEGRAKMDLAVAVGKKLYDKREDIASRDAWRDMERSLKERNRA.

Belongs to the SmpB family.

It is found in the cytoplasm. In terms of biological role, required for rescue of stalled ribosomes mediated by trans-translation. Binds to transfer-messenger RNA (tmRNA), required for stable association of tmRNA with ribosomes. tmRNA and SmpB together mimic tRNA shape, replacing the anticodon stem-loop with SmpB. tmRNA is encoded by the ssrA gene; the 2 termini fold to resemble tRNA(Ala) and it encodes a 'tag peptide', a short internal open reading frame. During trans-translation Ala-aminoacylated tmRNA acts like a tRNA, entering the A-site of stalled ribosomes, displacing the stalled mRNA. The ribosome then switches to translate the ORF on the tmRNA; the nascent peptide is terminated with the 'tag peptide' encoded by the tmRNA and targeted for degradation. The ribosome is freed to recommence translation, which seems to be the essential function of trans-translation. This Syntrophomonas wolfei subsp. wolfei (strain DSM 2245B / Goettingen) protein is SsrA-binding protein.